Here is a 473-residue protein sequence, read N- to C-terminus: Photosystem II CP43 reaction center protein (473 aa).

Positions Met-1 to Glu-14 are excised as a propeptide. Residue Thr-15 is modified to N-acetylthreonine. Thr-15 carries the phosphothreonine modification. The next 5 membrane-spanning stretches (helical) occupy residues Leu-69–Ala-93, Leu-134–Asn-155, Lys-178–Thr-200, Lys-255–Ser-275, and Trp-291–Ala-312. Glu-367 is a binding site for [CaMn4O5] cluster. The helical transmembrane segment at Arg-447–Pro-471 threads the bilayer.

It belongs to the PsbB/PsbC family. PsbC subfamily. As to quaternary structure, PSII is composed of 1 copy each of membrane proteins PsbA, PsbB, PsbC, PsbD, PsbE, PsbF, PsbH, PsbI, PsbJ, PsbK, PsbL, PsbM, PsbT, PsbX, PsbY, PsbZ, Psb30/Ycf12, at least 3 peripheral proteins of the oxygen-evolving complex and a large number of cofactors. It forms dimeric complexes. The cofactor is Binds multiple chlorophylls and provides some of the ligands for the Ca-4Mn-5O cluster of the oxygen-evolving complex. It may also provide a ligand for a Cl- that is required for oxygen evolution. PSII binds additional chlorophylls, carotenoids and specific lipids..

It localises to the plastid. Its subcellular location is the chloroplast thylakoid membrane. Its function is as follows. One of the components of the core complex of photosystem II (PSII). It binds chlorophyll and helps catalyze the primary light-induced photochemical processes of PSII. PSII is a light-driven water:plastoquinone oxidoreductase, using light energy to abstract electrons from H(2)O, generating O(2) and a proton gradient subsequently used for ATP formation. This chain is Photosystem II CP43 reaction center protein, found in Cryptomeria japonica (Japanese cedar).